A 49-amino-acid chain; its full sequence is Protein OPG059 (49 aa).

Residue M1 is a topological domain, virion surface. Residues V2–V22 traverse the membrane as a helical segment. Residues L23–Y49 lie on the Intravirion side of the membrane.

Belongs to the orthopoxvirus OPG058 family.

It localises to the virion membrane. It is found in the host membrane. Its function is as follows. May play a role in cell adhesion and is important for virus virulence in vivo, although it is not required for the virus life cycle in cell cultures. The polypeptide is Protein OPG059 (OPG059) (Vaccinia virus (strain Western Reserve) (VACV)).